A 901-amino-acid chain; its full sequence is Protein translocase subunit SecA (901 aa).

Residues Gln-85, 103-107 (GEGKT), and Asp-510 contribute to the ATP site. Positions 836-845 (EEAERARQEM) are enriched in basic and acidic residues. A disordered region spans residues 836–901 (EEAERARQEM…HCHGSRVARQ (66 aa)). Residues 849–866 (INQNNLPVDENSQTTQNS) are compositionally biased toward polar residues. The Zn(2+) site is built by Cys-882, Cys-884, Cys-893, and His-894. The span at 888-901 (KKYKHCHGSRVARQ) shows a compositional bias: basic residues.

This sequence belongs to the SecA family. Monomer and homodimer. Part of the essential Sec protein translocation apparatus which comprises SecA, SecYEG and auxiliary proteins SecDF-YajC and YidC. Requires Zn(2+) as cofactor.

It is found in the cell inner membrane. It localises to the cytoplasm. It carries out the reaction ATP + H2O + cellular proteinSide 1 = ADP + phosphate + cellular proteinSide 2.. Its function is as follows. Part of the Sec protein translocase complex. Interacts with the SecYEG preprotein conducting channel. Has a central role in coupling the hydrolysis of ATP to the transfer of proteins into and across the cell membrane, serving both as a receptor for the preprotein-SecB complex and as an ATP-driven molecular motor driving the stepwise translocation of polypeptide chains across the membrane. The polypeptide is Protein translocase subunit SecA (Haemophilus influenzae (strain PittEE)).